The following is a 305-amino-acid chain: Aspartate carbamoyltransferase catalytic subunit (305 aa).

Residues Arg53 and Thr54 each contribute to the carbamoyl phosphate site. Lys82 is a binding site for L-aspartate. Residues Arg103, His131, and Gln134 each contribute to the carbamoyl phosphate site. Positions 164 and 226 each coordinate L-aspartate. Leu265 and Pro266 together coordinate carbamoyl phosphate.

It belongs to the aspartate/ornithine carbamoyltransferase superfamily. ATCase family. In terms of assembly, heterooligomer of catalytic and regulatory chains.

It carries out the reaction carbamoyl phosphate + L-aspartate = N-carbamoyl-L-aspartate + phosphate + H(+). It functions in the pathway pyrimidine metabolism; UMP biosynthesis via de novo pathway; (S)-dihydroorotate from bicarbonate: step 2/3. In terms of biological role, catalyzes the condensation of carbamoyl phosphate and aspartate to form carbamoyl aspartate and inorganic phosphate, the committed step in the de novo pyrimidine nucleotide biosynthesis pathway. This Ignicoccus hospitalis (strain KIN4/I / DSM 18386 / JCM 14125) protein is Aspartate carbamoyltransferase catalytic subunit.